A 495-amino-acid polypeptide reads, in one-letter code: Lysine--tRNA ligase (495 aa).

Mg(2+)-binding residues include Glu-406 and Glu-413.

Belongs to the class-II aminoacyl-tRNA synthetase family. As to quaternary structure, homodimer. Mg(2+) is required as a cofactor.

The protein resides in the cytoplasm. It carries out the reaction tRNA(Lys) + L-lysine + ATP = L-lysyl-tRNA(Lys) + AMP + diphosphate. This chain is Lysine--tRNA ligase, found in Staphylococcus aureus (strain MRSA252).